Reading from the N-terminus, the 178-residue chain is Adenine phosphoribosyltransferase (178 aa).

The protein belongs to the purine/pyrimidine phosphoribosyltransferase family. In terms of assembly, homodimer.

The protein localises to the cytoplasm. The enzyme catalyses AMP + diphosphate = 5-phospho-alpha-D-ribose 1-diphosphate + adenine. It participates in purine metabolism; AMP biosynthesis via salvage pathway; AMP from adenine: step 1/1. Its function is as follows. Catalyzes a salvage reaction resulting in the formation of AMP, that is energically less costly than de novo synthesis. This chain is Adenine phosphoribosyltransferase, found in Cereibacter sphaeroides (strain ATCC 17025 / ATH 2.4.3) (Rhodobacter sphaeroides).